Consider the following 346-residue polypeptide: Holliday junction branch migration complex subunit RuvB (346 aa).

The large ATPase domain (RuvB-L) stretch occupies residues 1–182 (MKIELLNTPA…FGISSRFDYY (182 aa)). Residues isoleucine 21, arginine 22, glycine 63, lysine 66, threonine 67, threonine 68, 129 to 131 (EDF), arginine 172, tyrosine 182, and arginine 219 each bind ATP. Threonine 67 provides a ligand contact to Mg(2+). A small ATPAse domain (RuvB-S) region spans residues 183–253 (PPELLERIIL…IAMTTLASLE (71 aa)). The interval 256–346 (EEGLDDMDKK…GPLFDAAPAR (91 aa)) is head domain (RuvB-H). The DNA site is built by arginine 311 and arginine 316.

The protein belongs to the RuvB family. Homohexamer. Forms an RuvA(8)-RuvB(12)-Holliday junction (HJ) complex. HJ DNA is sandwiched between 2 RuvA tetramers; dsDNA enters through RuvA and exits via RuvB. An RuvB hexamer assembles on each DNA strand where it exits the tetramer. Each RuvB hexamer is contacted by two RuvA subunits (via domain III) on 2 adjacent RuvB subunits; this complex drives branch migration. In the full resolvosome a probable DNA-RuvA(4)-RuvB(12)-RuvC(2) complex forms which resolves the HJ.

Its subcellular location is the cytoplasm. It catalyses the reaction ATP + H2O = ADP + phosphate + H(+). The RuvA-RuvB-RuvC complex processes Holliday junction (HJ) DNA during genetic recombination and DNA repair, while the RuvA-RuvB complex plays an important role in the rescue of blocked DNA replication forks via replication fork reversal (RFR). RuvA specifically binds to HJ cruciform DNA, conferring on it an open structure. The RuvB hexamer acts as an ATP-dependent pump, pulling dsDNA into and through the RuvAB complex. RuvB forms 2 homohexamers on either side of HJ DNA bound by 1 or 2 RuvA tetramers; 4 subunits per hexamer contact DNA at a time. Coordinated motions by a converter formed by DNA-disengaged RuvB subunits stimulates ATP hydrolysis and nucleotide exchange. Immobilization of the converter enables RuvB to convert the ATP-contained energy into a lever motion, pulling 2 nucleotides of DNA out of the RuvA tetramer per ATP hydrolyzed, thus driving DNA branch migration. The RuvB motors rotate together with the DNA substrate, which together with the progressing nucleotide cycle form the mechanistic basis for DNA recombination by continuous HJ branch migration. Branch migration allows RuvC to scan DNA until it finds its consensus sequence, where it cleaves and resolves cruciform DNA. The polypeptide is Holliday junction branch migration complex subunit RuvB (Chlorobium phaeobacteroides (strain DSM 266 / SMG 266 / 2430)).